A 465-amino-acid chain; its full sequence is Chromosomal replication initiator protein DnaA (465 aa).

Positions 1–85 (MSGFWESCLQ…IALVIGSGKA (85 aa)) are domain I, interacts with DnaA modulators. Positions 85–129 (ATAARIQATTTDSGQNAPANPATTSEKRTAASEKARGKGSNYEKS) are domain II. Over residues 93 to 108 (TTTDSGQNAPANPATT) the composition is skewed to polar residues. Residues 93-125 (TTTDSGQNAPANPATTSEKRTAASEKARGKGSN) form a disordered region. Basic and acidic residues predominate over residues 109–125 (SEKRTAASEKARGKGSN). Positions 130-346 (RLFPSFTFDN…GALKKVLAYS (217 aa)) are domain III, AAA+ region. Residues glycine 174, glycine 176, lysine 177, and threonine 178 each contribute to the ATP site. The domain IV, binds dsDNA stretch occupies residues 347–465 (SFHGRVIALD…LHVLLQVLKG (119 aa)).

The protein belongs to the DnaA family. Oligomerizes as a right-handed, spiral filament on DNA at oriC.

The protein resides in the cytoplasm. Its function is as follows. Plays an essential role in the initiation and regulation of chromosomal replication. ATP-DnaA binds to the origin of replication (oriC) to initiate formation of the DNA replication initiation complex once per cell cycle. Binds the DnaA box (a 9 base pair repeat at the origin) and separates the double-stranded (ds)DNA. Forms a right-handed helical filament on oriC DNA; dsDNA binds to the exterior of the filament while single-stranded (ss)DNA is stabiized in the filament's interior. The ATP-DnaA-oriC complex binds and stabilizes one strand of the AT-rich DNA unwinding element (DUE), permitting loading of DNA polymerase. After initiation quickly degrades to an ADP-DnaA complex that is not apt for DNA replication. Binds acidic phospholipids. The protein is Chromosomal replication initiator protein DnaA of Dechloromonas aromatica (strain RCB).